The following is a 123-amino-acid chain: uncharacterized protein (123 aa).

Residues 36–76 (VDRQENKKEFLSAEEAREKFKELINQVRSWKEQMSTLSKYA) are a coiled coil.

This is an uncharacterized protein from Aquifex aeolicus (strain VF5).